Reading from the N-terminus, the 196-residue chain is Nodulation protein A (196 aa).

It belongs to the NodA family.

Its subcellular location is the cytoplasm. Its function is as follows. N-acyltransferase required for nodulation. Acts in the production of a small, heat-stable compound (Nod) that stimulates mitosis in various plant protoplasts. The chain is Nodulation protein A from Sinorhizobium terangae.